Consider the following 485-residue polypeptide: Cysteine--tRNA ligase (485 aa).

Cys27 is a binding site for Zn(2+). The short motif at 29–39 (ITAYDLCHIGH) is the 'HIGH' region element. Residues Cys208, His233, and Glu237 each contribute to the Zn(2+) site. A 'KMSKS' region motif is present at residues 265–269 (KMSKS). Lys268 provides a ligand contact to ATP.

It belongs to the class-I aminoacyl-tRNA synthetase family. Monomer. Requires Zn(2+) as cofactor.

The protein resides in the cytoplasm. The catalysed reaction is tRNA(Cys) + L-cysteine + ATP = L-cysteinyl-tRNA(Cys) + AMP + diphosphate. The sequence is that of Cysteine--tRNA ligase from Nitratidesulfovibrio vulgaris (strain ATCC 29579 / DSM 644 / CCUG 34227 / NCIMB 8303 / VKM B-1760 / Hildenborough) (Desulfovibrio vulgaris).